The primary structure comprises 413 residues: 2,3-bisphosphoglycerate-independent phosphoglycerate mutase (413 aa).

This sequence belongs to the BPG-independent phosphoglycerate mutase family. A-PGAM subfamily.

The catalysed reaction is (2R)-2-phosphoglycerate = (2R)-3-phosphoglycerate. Its pathway is carbohydrate degradation; glycolysis; pyruvate from D-glyceraldehyde 3-phosphate: step 3/5. In terms of biological role, catalyzes the interconversion of 2-phosphoglycerate and 3-phosphoglycerate. The protein is 2,3-bisphosphoglycerate-independent phosphoglycerate mutase of Sulfurisphaera tokodaii (strain DSM 16993 / JCM 10545 / NBRC 100140 / 7) (Sulfolobus tokodaii).